Reading from the N-terminus, the 484-residue chain is Replication factor C large subunit (484 aa).

46–53 provides a ligand contact to ATP; sequence GPPGSGKT. 3 stretches are compositionally biased toward basic and acidic residues: residues 419-432, 442-451, and 459-478; these read VKTE…KTKE, RISEPPEPLK, and KSVE…KKQA. The tract at residues 419-484 is disordered; it reads VKTETPKKKE…KKQATLDSFF (66 aa).

Belongs to the activator 1 small subunits family. RfcL subfamily. In terms of assembly, heteromultimer composed of small subunits (RfcS) and large subunits (RfcL).

In terms of biological role, part of the RFC clamp loader complex which loads the PCNA sliding clamp onto DNA. This Methanococcus maripaludis (strain C5 / ATCC BAA-1333) protein is Replication factor C large subunit.